The chain runs to 240 residues: UDP-2,3-diacylglucosamine hydrolase (240 aa).

Residues Asp9, His11, Asp43, Asn81, and His116 each coordinate Mn(2+). 81-82 (NR) is a binding site for substrate. Substrate-binding residues include Asp124, Ser162, Lys166, Lys169, and His197. Mn(2+) contacts are provided by His197 and His199.

The protein belongs to the LpxH family. Requires Mn(2+) as cofactor.

The protein resides in the cell inner membrane. The catalysed reaction is UDP-2-N,3-O-bis[(3R)-3-hydroxytetradecanoyl]-alpha-D-glucosamine + H2O = 2-N,3-O-bis[(3R)-3-hydroxytetradecanoyl]-alpha-D-glucosaminyl 1-phosphate + UMP + 2 H(+). It functions in the pathway glycolipid biosynthesis; lipid IV(A) biosynthesis; lipid IV(A) from (3R)-3-hydroxytetradecanoyl-[acyl-carrier-protein] and UDP-N-acetyl-alpha-D-glucosamine: step 4/6. Hydrolyzes the pyrophosphate bond of UDP-2,3-diacylglucosamine to yield 2,3-diacylglucosamine 1-phosphate (lipid X) and UMP by catalyzing the attack of water at the alpha-P atom. Involved in the biosynthesis of lipid A, a phosphorylated glycolipid that anchors the lipopolysaccharide to the outer membrane of the cell. The polypeptide is UDP-2,3-diacylglucosamine hydrolase (Neisseria meningitidis serogroup C (strain 053442)).